Consider the following 976-residue polypeptide: Probable alanine--tRNA ligase, chloroplastic/mitochondrial (976 aa).

The N-terminal 54 residues, 1–54 (MPRPGFAHATAPALAHARARISPVARRRVVVMRTRVDGAAKSLVTQLRLALGST), are a transit peptide targeting the chloroplast and mitochondrion. A disordered region spans residues 71–95 (LGTATNDQSTGTRANPNAEGKDNSG). Polar residues predominate over residues 73-85 (TATNDQSTGTRAN).

Belongs to the class-II aminoacyl-tRNA synthetase family. In terms of assembly, monomer. Requires Zn(2+) as cofactor.

The protein localises to the plastid. Its subcellular location is the chloroplast. The protein resides in the mitochondrion. The catalysed reaction is tRNA(Ala) + L-alanine + ATP = L-alanyl-tRNA(Ala) + AMP + diphosphate. Catalyzes the attachment of alanine to tRNA(Ala) in a two-step reaction: alanine is first activated by ATP to form Ala-AMP and then transferred to the acceptor end of tRNA(Ala). Also edits incorrectly charged tRNA(Ala) via its editing domain. The sequence is that of Probable alanine--tRNA ligase, chloroplastic/mitochondrial from Ostreococcus tauri.